A 453-amino-acid polypeptide reads, in one-letter code: Bifunctional protein GlmU (453 aa).

Residues 1–226 (MTLDVVILAA…ALEVEGVNNR (226 aa)) form a pyrophosphorylase region. Residues 8–11 (LAAG), Lys22, Gln73, 78–79 (GT), 99–101 (YGD), Gly136, Glu151, Asn166, and Asn224 each bind UDP-N-acetyl-alpha-D-glucosamine. Asp101 provides a ligand contact to Mg(2+). Asn224 serves as a coordination point for Mg(2+). Residues 227 to 247 (SQMAALERAYQRDRAERLLTE) are linker. The N-acetyltransferase stretch occupies residues 248 to 453 (GVALADPARF…AGWKRPRKSS (206 aa)). Positions 330 and 348 each coordinate UDP-N-acetyl-alpha-D-glucosamine. His360 (proton acceptor) is an active-site residue. UDP-N-acetyl-alpha-D-glucosamine contacts are provided by Tyr363 and Asn374. Acetyl-CoA-binding positions include Ala377, 383 to 384 (NY), Ser402, Ala420, and Arg437.

In the N-terminal section; belongs to the N-acetylglucosamine-1-phosphate uridyltransferase family. This sequence in the C-terminal section; belongs to the transferase hexapeptide repeat family. In terms of assembly, homotrimer. Requires Mg(2+) as cofactor.

The protein localises to the cytoplasm. The catalysed reaction is alpha-D-glucosamine 1-phosphate + acetyl-CoA = N-acetyl-alpha-D-glucosamine 1-phosphate + CoA + H(+). It catalyses the reaction N-acetyl-alpha-D-glucosamine 1-phosphate + UTP + H(+) = UDP-N-acetyl-alpha-D-glucosamine + diphosphate. The protein operates within nucleotide-sugar biosynthesis; UDP-N-acetyl-alpha-D-glucosamine biosynthesis; N-acetyl-alpha-D-glucosamine 1-phosphate from alpha-D-glucosamine 6-phosphate (route II): step 2/2. It functions in the pathway nucleotide-sugar biosynthesis; UDP-N-acetyl-alpha-D-glucosamine biosynthesis; UDP-N-acetyl-alpha-D-glucosamine from N-acetyl-alpha-D-glucosamine 1-phosphate: step 1/1. Its pathway is bacterial outer membrane biogenesis; LPS lipid A biosynthesis. In terms of biological role, catalyzes the last two sequential reactions in the de novo biosynthetic pathway for UDP-N-acetylglucosamine (UDP-GlcNAc). The C-terminal domain catalyzes the transfer of acetyl group from acetyl coenzyme A to glucosamine-1-phosphate (GlcN-1-P) to produce N-acetylglucosamine-1-phosphate (GlcNAc-1-P), which is converted into UDP-GlcNAc by the transfer of uridine 5-monophosphate (from uridine 5-triphosphate), a reaction catalyzed by the N-terminal domain. This chain is Bifunctional protein GlmU, found in Chromohalobacter salexigens (strain ATCC BAA-138 / DSM 3043 / CIP 106854 / NCIMB 13768 / 1H11).